We begin with the raw amino-acid sequence, 227 residues long: MTAIAPVITIDGPSGAGKGTLCKAMAEALQWHLLDSGAIYRVLALAALHHHVGLASEDALVPLASHLDVRFVSTDGNLEVILEGEDVSGEIRTQEVANAASQVAAFPRVREALLRRQRAFREAPGLIADGRDMGTVVFPDAPVKIFLDASSEERANRRMLQLQEKGFSVNFERLLAEIKERDDRDRNRAVAPLVPAADALVLDSTRLSIEQVIEKALQYARQKLALA.

Residue 12 to 20 (GPSGAGKGT) coordinates ATP.

The protein belongs to the cytidylate kinase family. Type 1 subfamily.

It is found in the cytoplasm. It carries out the reaction CMP + ATP = CDP + ADP. The catalysed reaction is dCMP + ATP = dCDP + ADP. In Salmonella arizonae (strain ATCC BAA-731 / CDC346-86 / RSK2980), this protein is Cytidylate kinase.